Consider the following 1320-residue polypeptide: Bifunctional protein PutA (1320 aa).

The interval 228-574 is proline dehydrogenase; it reads LSRSLNRIIG…SFVNRIADTS (347 aa). The aldehyde dehydrogenase stretch occupies residues 653–1119; it reads QPVAAGEMSP…LANRPESALA (467 aa). Residues E883 and C917 contribute to the active site.

This sequence in the N-terminal section; belongs to the proline dehydrogenase family. It in the C-terminal section; belongs to the aldehyde dehydrogenase family. Homodimer. The cofactor is FAD.

The catalysed reaction is L-proline + a quinone = (S)-1-pyrroline-5-carboxylate + a quinol + H(+). It catalyses the reaction L-glutamate 5-semialdehyde + NAD(+) + H2O = L-glutamate + NADH + 2 H(+). It participates in amino-acid degradation; L-proline degradation into L-glutamate; L-glutamate from L-proline: step 1/2. The protein operates within amino-acid degradation; L-proline degradation into L-glutamate; L-glutamate from L-proline: step 2/2. Its function is as follows. Oxidizes proline to glutamate for use as a carbon and nitrogen source and also function as a transcriptional repressor of the put operon. This Escherichia coli (strain K12) protein is Bifunctional protein PutA (putA).